Consider the following 152-residue polypeptide: D-aminoacyl-tRNA deacylase (152 aa).

The Gly-cisPro motif, important for rejection of L-amino acids signature appears at 137–138; sequence GP.

It belongs to the DTD family. Homodimer.

The protein resides in the cytoplasm. The catalysed reaction is glycyl-tRNA(Ala) + H2O = tRNA(Ala) + glycine + H(+). The enzyme catalyses a D-aminoacyl-tRNA + H2O = a tRNA + a D-alpha-amino acid + H(+). Functionally, an aminoacyl-tRNA editing enzyme that deacylates mischarged D-aminoacyl-tRNAs. Also deacylates mischarged glycyl-tRNA(Ala), protecting cells against glycine mischarging by AlaRS. Acts via tRNA-based rather than protein-based catalysis; rejects L-amino acids rather than detecting D-amino acids in the active site. By recycling D-aminoacyl-tRNA to D-amino acids and free tRNA molecules, this enzyme counteracts the toxicity associated with the formation of D-aminoacyl-tRNA entities in vivo and helps enforce protein L-homochirality. This Thermus aquaticus protein is D-aminoacyl-tRNA deacylase.